The sequence spans 181 residues: ATP synthase subunit delta (181 aa).

This sequence belongs to the ATPase delta chain family. F-type ATPases have 2 components, F(1) - the catalytic core - and F(0) - the membrane proton channel. F(1) has five subunits: alpha(3), beta(3), gamma(1), delta(1), epsilon(1). F(0) has three main subunits: a(1), b(2) and c(10-14). The alpha and beta chains form an alternating ring which encloses part of the gamma chain. F(1) is attached to F(0) by a central stalk formed by the gamma and epsilon chains, while a peripheral stalk is formed by the delta and b chains.

It is found in the cell inner membrane. Functionally, f(1)F(0) ATP synthase produces ATP from ADP in the presence of a proton or sodium gradient. F-type ATPases consist of two structural domains, F(1) containing the extramembraneous catalytic core and F(0) containing the membrane proton channel, linked together by a central stalk and a peripheral stalk. During catalysis, ATP synthesis in the catalytic domain of F(1) is coupled via a rotary mechanism of the central stalk subunits to proton translocation. Its function is as follows. This protein is part of the stalk that links CF(0) to CF(1). It either transmits conformational changes from CF(0) to CF(1) or is implicated in proton conduction. The sequence is that of ATP synthase subunit delta from Protochlamydia amoebophila (strain UWE25).